A 121-amino-acid chain; its full sequence is Replication protein A 14 kDa subunit (121 aa).

Glycyl lysine isopeptide (Lys-Gly) (interchain with G-Cter in ubiquitin) cross-links involve residues K39 and K88.

This sequence belongs to the replication factor A protein 3 family. As to quaternary structure, component of the canonical replication protein A complex (RPA), a heterotrimer composed of RPA1, RPA2 and RPA3. Also a component of the aRPA, the alternative replication protein A complex, a trimeric complex similar to the replication protein A complex/RPA but where RPA1 and RPA3 are associated with RPA4 instead of RPA2. Ubiquitinated by RFWD3 at stalled replication forks in response to DNA damage: ubiquitination by RFWD3 does not lead to degradation by the proteasome and promotes removal of the RPA complex from stalled replication forks, promoting homologous recombination.

It localises to the nucleus. In terms of biological role, as part of the heterotrimeric replication protein A complex (RPA/RP-A), binds and stabilizes single-stranded DNA intermediates, that form during DNA replication or upon DNA stress. It prevents their reannealing and in parallel, recruits and activates different proteins and complexes involved in DNA metabolism. Thereby, it plays an essential role both in DNA replication and the cellular response to DNA damage. In the cellular response to DNA damage, the RPA complex controls DNA repair and DNA damage checkpoint activation. Through recruitment of ATRIP activates the ATR kinase a master regulator of the DNA damage response. It is required for the recruitment of the DNA double-strand break repair factors RAD51 and RAD52 to chromatin, in response to DNA damage. Also recruits to sites of DNA damage proteins like XPA and XPG that are involved in nucleotide excision repair and is required for this mechanism of DNA repair. Also plays a role in base excision repair (BER), probably through interaction with UNG. Also recruits SMARCAL1/HARP, which is involved in replication fork restart, to sites of DNA damage. May also play a role in telomere maintenance. RPA3 has its own single-stranded DNA-binding activity and may be responsible for polarity of the binding of the complex to DNA. This Mus musculus (Mouse) protein is Replication protein A 14 kDa subunit (Rpa3).